A 356-amino-acid chain; its full sequence is Nicotinate-nucleotide--dimethylbenzimidazole phosphoribosyltransferase (356 aa).

The active-site Proton acceptor is the Glu-317.

It belongs to the CobT family. As to quaternary structure, homodimer.

It carries out the reaction 5,6-dimethylbenzimidazole + nicotinate beta-D-ribonucleotide = alpha-ribazole 5'-phosphate + nicotinate + H(+). It participates in nucleoside biosynthesis; alpha-ribazole biosynthesis; alpha-ribazole from 5,6-dimethylbenzimidazole: step 1/2. Catalyzes the synthesis of alpha-ribazole-5'-phosphate from nicotinate mononucleotide (NAMN) and 5,6-dimethylbenzimidazole (DMB). The chain is Nicotinate-nucleotide--dimethylbenzimidazole phosphoribosyltransferase from Salmonella paratyphi C (strain RKS4594).